The following is a 331-amino-acid chain: Ribosomal RNA small subunit methyltransferase H (331 aa).

S-adenosyl-L-methionine is bound by residues 38-40 (GGY), aspartate 56, phenylalanine 83, aspartate 100, and glutamine 107. A disordered region spans residues 289-331 (AELAENPRARSARLRVGVRTDAPAGKVDPQALGTPLIPKKGRR).

Belongs to the methyltransferase superfamily. RsmH family.

The protein localises to the cytoplasm. The catalysed reaction is cytidine(1402) in 16S rRNA + S-adenosyl-L-methionine = N(4)-methylcytidine(1402) in 16S rRNA + S-adenosyl-L-homocysteine + H(+). Functionally, specifically methylates the N4 position of cytidine in position 1402 (C1402) of 16S rRNA. The chain is Ribosomal RNA small subunit methyltransferase H from Cereibacter sphaeroides (strain ATCC 17029 / ATH 2.4.9) (Rhodobacter sphaeroides).